The sequence spans 901 residues: MTTQLNINLVIENAKRVITPLSPISIFAARNPWEGLEADTFEDVAKWLRDVRDVDIFPNKALIESAVARGELDESVFNQLVTDMLLEHHYNIPQHYINLYIDNIKTLKDVPASYMNHSNVDVVADLLLEKSKRDMAESYHHYDVRPMSDAIIDEQGEPLSEQVNRQMIKWTKLYIDQFLSSWTMPKREQSFYHAWLHLAQHDHSFTKAQRQVIKDLPNDPKMTIESVLNHFSIAQEDYQAYVEGHLLALPGWAGMLYYRSQQHHFEQHLLTDYLAIRLVVEQLLVGDEFKSVTKDCESRSENWFKQTVASWCYYSDMPSDVLLQHDVNEIQTFIHFAATMNKNVFKNLWLIAWEMTYESQVKQKIKAGHESLAGALDVNQVNVTENDNANQSHSVSLNDTQAVDENNSELNQVDTSTKAQIAFCIDVRSEPFRRHIEAAGPFETIGIAGFFGLPIQKDAVDEQFKHDSLPVMVPPAYRIKEFADRYDMNVYRQQQQTMSSMFYTFKLMKNNVMPSLLLPELSGPFLSLSTIVNTIMPRKSRASLQKIKQKWLKKPETKLTIDREFDRTSDLPVGFTEQEQIDFALQALKLMDLTEAFAPFVVLAGHASHSHNNPHHASLECGACGGASSGFNAKLLAMICNRPNVRQGLKQAGVYIPETTVFAAAEHHTSTDTLAWVYVPDTLSALALDAYESLNDVMPMISEHANRERLDKLPTIGRVNHPVEEAQRFASDWSEVRPEWGLAKNASFIIGRRQLTKGIDLEGRTFLHNYDWRKDKDGTLLNTIISGPVLVAQWINLQYYASTVAPHFYGSGNKATQTVTSGVGVMQGNASDLMYGLSWQSVMAADRTMYHSPIRLLVVIQAPDYVVARLLANNEHFARKASNHWLRLMSVNEEGRFKSWI.

Zn(2+)-binding residues include Cys424, Asp426, His606, and Cys621.

Belongs to the inorganic carbon transporter (TC 9.A.2) DabA family. As to quaternary structure, forms a complex with DabB. Zn(2+) serves as cofactor.

Its subcellular location is the cell membrane. Its function is as follows. Part of an energy-coupled inorganic carbon pump. This chain is Probable inorganic carbon transporter subunit DabA, found in Staphylococcus aureus (strain bovine RF122 / ET3-1).